Consider the following 508-residue polypeptide: Protoporphyrinogen oxidase 2, chloroplastic/mitochondrial (508 aa).

A chloroplast and mitochondrion-targeting transit peptide spans 1 to 22; sequence MASGAVADHQIEAVSGKRVAVV. Residues 23–28, 46–47, and 68–71 each bind FAD; these read GAGVSG, EA, and GANT. Residues 219–239 are disordered; sequence KGGKSRDTKSSPGTKKGSRGS. Residues V268 and 475–477 contribute to the FAD site; that span reads LSV.

The protein belongs to the protoporphyrinogen/coproporphyrinogen oxidase family. Protoporphyrinogen oxidase subfamily. Requires FAD as cofactor.

It localises to the plastid. The protein localises to the chloroplast. It is found in the mitochondrion. It carries out the reaction protoporphyrinogen IX + 3 O2 = protoporphyrin IX + 3 H2O2. Its pathway is porphyrin-containing compound metabolism; protoporphyrin-IX biosynthesis; protoporphyrin-IX from protoporphyrinogen-IX: step 1/1. The protein operates within porphyrin-containing compound metabolism; chlorophyll biosynthesis. In terms of biological role, catalyzes the 6-electron oxidation of protoporphyrinogen-IX to form protoporphyrin-IX. This is Protoporphyrinogen oxidase 2, chloroplastic/mitochondrial (PPOX2) from Arabidopsis thaliana (Mouse-ear cress).